A 367-amino-acid polypeptide reads, in one-letter code: Undecaprenyl-phosphate alpha-N-acetylglucosaminyl 1-phosphate transferase (367 aa).

Helical transmembrane passes span 3–23, 46–66, 69–89, 132–152, 158–178, 187–207, 213–233, 242–262, 294–314, and 318–338; these read LLTVSTDLISIFLFTTLFLFF, LIPLVGGISVYAGICFTFGIV, YIPHASLYLACAGVLVFIGAL, VLGPFGYFLTLFAVWAAINAF, IDGLLGGLSCVSFAAIGMILW, IWCFAMIAAILPYIMLNLGIL, VFMGDAGSTLIGFTVIWILLE, ISPVTALWIIAIPLMDMVAIM, AFVLITLAAALLASIGVLAEY, and VPEWVMLVLFLLAFFLYGYCI.

Belongs to the glycosyltransferase 4 family. WecA subfamily. Mg(2+) serves as cofactor. The cofactor is Mn(2+).

It localises to the cell inner membrane. The enzyme catalyses di-trans,octa-cis-undecaprenyl phosphate + UDP-N-acetyl-alpha-D-glucosamine = N-acetyl-alpha-D-glucosaminyl-di-trans,octa-cis-undecaprenyl diphosphate + UMP. The protein operates within bacterial outer membrane biogenesis; LPS O-antigen biosynthesis. It functions in the pathway bacterial outer membrane biogenesis; enterobacterial common antigen biosynthesis. Its function is as follows. Catalyzes the transfer of the GlcNAc-1-phosphate moiety from UDP-GlcNAc onto the carrier lipid undecaprenyl phosphate (C55-P), yielding GlcNAc-pyrophosphoryl-undecaprenyl (GlcNAc-PP-C55). The protein is Undecaprenyl-phosphate alpha-N-acetylglucosaminyl 1-phosphate transferase of Escherichia coli O6:H1 (strain CFT073 / ATCC 700928 / UPEC).